A 120-amino-acid polypeptide reads, in one-letter code: Large ribosomal subunit protein bL20 (120 aa).

Belongs to the bacterial ribosomal protein bL20 family.

In terms of biological role, binds directly to 23S ribosomal RNA and is necessary for the in vitro assembly process of the 50S ribosomal subunit. It is not involved in the protein synthesizing functions of that subunit. In Blochmanniella pennsylvanica (strain BPEN), this protein is Large ribosomal subunit protein bL20.